The primary structure comprises 469 residues: UDP-N-acetylmuramoylalanine--D-glutamate ligase (469 aa).

123 to 129 (GTNGKST) contributes to the ATP binding site.

Belongs to the MurCDEF family.

It localises to the cytoplasm. The catalysed reaction is UDP-N-acetyl-alpha-D-muramoyl-L-alanine + D-glutamate + ATP = UDP-N-acetyl-alpha-D-muramoyl-L-alanyl-D-glutamate + ADP + phosphate + H(+). The protein operates within cell wall biogenesis; peptidoglycan biosynthesis. In terms of biological role, cell wall formation. Catalyzes the addition of glutamate to the nucleotide precursor UDP-N-acetylmuramoyl-L-alanine (UMA). This chain is UDP-N-acetylmuramoylalanine--D-glutamate ligase, found in Caulobacter sp. (strain K31).